A 371-amino-acid chain; its full sequence is Integrator complex assembly factor WDR73 (371 aa).

3 WD repeats span residues 81-121 (FSDR…DVIE), 273-313 (SPDP…GKKT), and 333-371 (DSAP…LQAS).

This sequence belongs to the WD repeat WDR73 family. Interacts with INTS9 and INTS11; the interaction is direct. Part of the multiprotein complex composed of BRAT1, WDR73, as well as integrator complex subunits INTS9 and INTS11.

It is found in the cytoplasm. The protein resides in the cytoskeleton. It localises to the spindle. Its subcellular location is the spindle pole. The protein localises to the cleavage furrow. Its function is as follows. Component of a multiprotein complex required for the assembly of the RNA endonuclease module of the integrator complex. Associates with INTS9 and INTS11 in the cytoplasm, stabilizing the INTS9-INTS11 heterodimer and blocking the active site of INTS11. BRAT1 then joins the complex and plugs the active site of INTS11, leading to WDR73 release and nuclear import of INTS9 and INTS11. In Mus musculus (Mouse), this protein is Integrator complex assembly factor WDR73 (Wdr73).